The chain runs to 82 residues: Cytochrome b559 subunit alpha (82 aa).

The helical transmembrane segment at 22–36 (IIHAVALPAIFVAGF) threads the bilayer. Residue His-24 participates in heme binding.

It belongs to the PsbE/PsbF family. Heterodimer of an alpha subunit and a beta subunit. PSII is composed of 1 copy each of membrane proteins PsbA, PsbB, PsbC, PsbD, PsbE, PsbF, PsbH, PsbI, PsbJ, PsbK, PsbL, PsbM, PsbT, PsbX, PsbY, Psb30/Ycf12, peripheral proteins PsbO, CyanoQ (PsbQ), PsbU, PsbV and a large number of cofactors. It forms dimeric complexes. The cofactor is heme b.

The protein localises to the cellular thylakoid membrane. In terms of biological role, this b-type cytochrome is tightly associated with the reaction center of photosystem II (PSII). PSII is a light-driven water:plastoquinone oxidoreductase that uses light energy to abstract electrons from H(2)O, generating O(2) and a proton gradient subsequently used for ATP formation. It consists of a core antenna complex that captures photons, and an electron transfer chain that converts photonic excitation into a charge separation. The protein is Cytochrome b559 subunit alpha of Prochlorococcus marinus (strain NATL1A).